The chain runs to 245 residues: Thiamine phosphate phosphatase-like protein (245 aa).

Asp9 acts as the Nucleophile in catalysis. Residues Asp9, Asp11, and Asp179 each contribute to the Mg(2+) site. The active-site Proton donor is Asp11.

This sequence belongs to the HAD-like hydrolase superfamily. In terms of assembly, monomer. It depends on Mg(2+) as a cofactor.

It carries out the reaction thiamine phosphate + H2O = thiamine + phosphate. In terms of biological role, HAD-like hydrolase that has a thiamine monophosphate phosphatase activity in a heterologous system. Does not contribute to thiamine monophosphate phosphatase activity in planta. The polypeptide is Thiamine phosphate phosphatase-like protein (Arabidopsis thaliana (Mouse-ear cress)).